Here is a 259-residue protein sequence, read N- to C-terminus: NAD kinase (259 aa).

The Proton acceptor role is filled by aspartate 43. NAD(+) is bound by residues 43–44 (DG), 111–112 (NE), and arginine 136.

Belongs to the NAD kinase family. A divalent metal cation is required as a cofactor.

It localises to the cytoplasm. It carries out the reaction NAD(+) + ATP = ADP + NADP(+) + H(+). Involved in the regulation of the intracellular balance of NAD and NADP, and is a key enzyme in the biosynthesis of NADP. Catalyzes specifically the phosphorylation on 2'-hydroxyl of the adenosine moiety of NAD to yield NADP. In Mycoplasma pneumoniae (strain ATCC 29342 / M129 / Subtype 1) (Mycoplasmoides pneumoniae), this protein is NAD kinase.